Consider the following 100-residue polypeptide: Small ribosomal subunit protein uS14c (100 aa).

Belongs to the universal ribosomal protein uS14 family. Part of the 30S ribosomal subunit.

Its subcellular location is the plastid. It localises to the chloroplast. Its function is as follows. Binds 16S rRNA, required for the assembly of 30S particles. The polypeptide is Small ribosomal subunit protein uS14c (Chloranthus spicatus (Chulantree)).